The primary structure comprises 339 residues: Phospho-N-acetylmuramoyl-pentapeptide-transferase (339 aa).

10 helical membrane-spanning segments follow: residues Thr-4–Ile-24, Met-53–Leu-73, Ala-80–Leu-100, Gly-113–Val-133, Leu-145–Val-165, Gly-176–Ala-196, Phe-202–Asn-222, Val-228–Thr-248, Trp-253–Val-273, and Val-318–Tyr-338.

Belongs to the glycosyltransferase 4 family. MraY subfamily. Requires Mg(2+) as cofactor.

The protein localises to the cell membrane. The catalysed reaction is UDP-N-acetyl-alpha-D-muramoyl-L-alanyl-gamma-D-glutamyl-L-lysyl-D-alanyl-D-alanine + di-trans,octa-cis-undecaprenyl phosphate = Mur2Ac(oyl-L-Ala-gamma-D-Glu-L-Lys-D-Ala-D-Ala)-di-trans,octa-cis-undecaprenyl diphosphate + UMP. Its pathway is cell wall biogenesis; peptidoglycan biosynthesis. Catalyzes the initial step of the lipid cycle reactions in the biosynthesis of the cell wall peptidoglycan: transfers peptidoglycan precursor phospho-MurNAc-pentapeptide from UDP-MurNAc-pentapeptide onto the lipid carrier undecaprenyl phosphate, yielding undecaprenyl-pyrophosphoryl-MurNAc-pentapeptide, known as lipid I. In Streptococcus mutans serotype c (strain ATCC 700610 / UA159), this protein is Phospho-N-acetylmuramoyl-pentapeptide-transferase.